The chain runs to 72 residues: MAKEGNIEMEGTIIDTLPNTMFRVQLENGHVVTAHISGKMRKNYIRILTGDKVKVEMTPYDLSKGRIVYRAR.

The 72-residue stretch at 1–72 folds into the S1-like domain; sequence MAKEGNIEME…SKGRIVYRAR (72 aa).

The protein belongs to the IF-1 family. Component of the 30S ribosomal translation pre-initiation complex which assembles on the 30S ribosome in the order IF-2 and IF-3, IF-1 and N-formylmethionyl-tRNA(fMet); mRNA recruitment can occur at any time during PIC assembly.

The protein resides in the cytoplasm. Functionally, one of the essential components for the initiation of protein synthesis. Stabilizes the binding of IF-2 and IF-3 on the 30S subunit to which N-formylmethionyl-tRNA(fMet) subsequently binds. Helps modulate mRNA selection, yielding the 30S pre-initiation complex (PIC). Upon addition of the 50S ribosomal subunit IF-1, IF-2 and IF-3 are released leaving the mature 70S translation initiation complex. This Hahella chejuensis (strain KCTC 2396) protein is Translation initiation factor IF-1.